The following is a 236-amino-acid chain: uncharacterized protein (236 aa).

It is found in the virion. This is an uncharacterized protein from Acanthamoeba polyphaga (Amoeba).